The following is a 241-amino-acid chain: Dihydropteridine reductase (241 aa).

An NADP(+)-binding site is contributed by 11–35 (LVYGGRGALGSRCVQAFRARNWWVA). Residues lysine 70, lysine 76, lysine 93, and lysine 99 each carry the N6-succinyllysine modification. Tyrosine 147 acts as the Proton acceptor in catalysis. Serine 170 carries the phosphoserine modification.

It belongs to the short-chain dehydrogenases/reductases (SDR) family. In terms of assembly, homodimer.

It catalyses the reaction 5,6,7,8-tetrahydropteridine + NAD(+) = 6,7-dihydropteridine + NADH + H(+). It carries out the reaction 5,6,7,8-tetrahydropteridine + NADP(+) = 6,7-dihydropteridine + NADPH + H(+). Catalyzes the conversion of quinonoid dihydrobiopterin into tetrahydrobiopterin. This is Dihydropteridine reductase (Qdpr) from Rattus norvegicus (Rat).